The primary structure comprises 380 residues: tRNA-specific 2-thiouridylase MnmA (380 aa).

ATP is bound by residues 26-33 (AMSGGVDS) and leucine 52. The Nucleophile role is filled by cysteine 120. Cysteine 120 and cysteine 217 are disulfide-bonded. An ATP-binding site is contributed by glycine 144. The interval 166 to 168 (RDQ) is interaction with tRNA. Catalysis depends on cysteine 217, which acts as the Cysteine persulfide intermediate.

The protein belongs to the MnmA/TRMU family.

The protein resides in the cytoplasm. The catalysed reaction is S-sulfanyl-L-cysteinyl-[protein] + uridine(34) in tRNA + AH2 + ATP = 2-thiouridine(34) in tRNA + L-cysteinyl-[protein] + A + AMP + diphosphate + H(+). In terms of biological role, catalyzes the 2-thiolation of uridine at the wobble position (U34) of tRNA, leading to the formation of s(2)U34. This chain is tRNA-specific 2-thiouridylase MnmA, found in Roseobacter denitrificans (strain ATCC 33942 / OCh 114) (Erythrobacter sp. (strain OCh 114)).